We begin with the raw amino-acid sequence, 892 residues long: Alanine--tRNA ligase (892 aa).

Residues His-596, His-600, Cys-700, and His-704 each contribute to the Zn(2+) site.

This sequence belongs to the class-II aminoacyl-tRNA synthetase family. The cofactor is Zn(2+).

It localises to the cytoplasm. It catalyses the reaction tRNA(Ala) + L-alanine + ATP = L-alanyl-tRNA(Ala) + AMP + diphosphate. In terms of biological role, catalyzes the attachment of alanine to tRNA(Ala) in a two-step reaction: alanine is first activated by ATP to form Ala-AMP and then transferred to the acceptor end of tRNA(Ala). Also edits incorrectly charged Ser-tRNA(Ala) and Gly-tRNA(Ala) via its editing domain. The polypeptide is Alanine--tRNA ligase (Methanococcus maripaludis (strain C6 / ATCC BAA-1332)).